Reading from the N-terminus, the 133-residue chain is Small ribosomal subunit protein uS19 (133 aa).

Belongs to the universal ribosomal protein uS19 family.

In terms of biological role, protein S19 forms a complex with S13 that binds strongly to the 16S ribosomal RNA. In Thermococcus gammatolerans (strain DSM 15229 / JCM 11827 / EJ3), this protein is Small ribosomal subunit protein uS19.